A 335-amino-acid polypeptide reads, in one-letter code: Fructokinase-2 (335 aa).

Belongs to the carbohydrate kinase PfkB family. Expressed in roots, at higher levels in stems, and hardly detectable in leaves.

It catalyses the reaction D-fructose + ATP = D-fructose 6-phosphate + ADP + H(+). The protein operates within glycan biosynthesis; starch biosynthesis. Its activity is regulated as follows. Inhibited at high fructose. Functionally, may play an important role in maintaining the flux of carbon towards starch formation. May also be involved in a sugar-sensing pathway. In Zea mays (Maize), this protein is Fructokinase-2 (FRK2).